The primary structure comprises 296 residues: Protoheme IX farnesyltransferase (296 aa).

9 consecutive transmembrane segments (helical) span residues 27 to 47 (IMYL…GTIH), 48 to 68 (PLIG…AGAL), 98 to 118 (ALEC…LTVN), 120 to 140 (VSAI…TMVL), 148 to 168 (IVIG…SVTG), 175 to 195 (LLLF…LSLL), 219 to 239 (HIMG…LYVA), 242 to 262 (VLYE…AYCL), and 274 to 294 (CMGL…AIAL).

This sequence belongs to the UbiA prenyltransferase family. Protoheme IX farnesyltransferase subfamily.

Its subcellular location is the cell inner membrane. It catalyses the reaction heme b + (2E,6E)-farnesyl diphosphate + H2O = Fe(II)-heme o + diphosphate. Its pathway is porphyrin-containing compound metabolism; heme O biosynthesis; heme O from protoheme: step 1/1. Its function is as follows. Converts heme B (protoheme IX) to heme O by substitution of the vinyl group on carbon 2 of heme B porphyrin ring with a hydroxyethyl farnesyl side group. This Anaplasma phagocytophilum (strain HZ) protein is Protoheme IX farnesyltransferase.